The sequence spans 785 residues: Proprotein convertase subtilisin/kexin type 7 (785 aa).

The signal sequence occupies residues 1–37 (MPKGRQKVPHLDAPLGLPTCLWLELAGLFLLVPWVMG). A propeptide spanning residues 38-141 (LAGTGGPDGQ…EQRLLRRAKR (104 aa)) is cleaved from the precursor. Residues 142–667 (SVHFNDPKYP…YTITPNTLKT (526 aa)) are Extracellular-facing. The Peptidase S8 domain maps to 153–473 (QWHLNNRRSP…FGLLNAWRLV (321 aa)). Residues asparagine 167 and asparagine 175 are each glycosylated (N-linked (GlcNAc...) asparagine). Residue aspartate 187 is the Charge relay system of the active site. The segment at 197-219 (IAPNYSPEGSYDLNSNDPDPMPH) is disordered. Histidine 228 acts as the Charge relay system in catalysis. N-linked (GlcNAc...) asparagine glycosylation occurs at asparagine 241. Serine 406 acts as the Charge relay system in catalysis. Residues 481–618 (SVPYLASYVS…QLTLYGSVWS (138 aa)) enclose the P/Homo B domain. A glycan (N-linked (GlcNAc...) asparagine) is linked at asparagine 511. Residues 668 to 688 (LVLVGCFTVFWTVYYMLEVYL) form a helical membrane-spanning segment. The Cytoplasmic portion of the chain corresponds to 689–785 (SQRNVASNQV…VPHGKEEQIC (97 aa)). A disordered region spans residues 700-751 (RSGPCHWPHRSRKAKEEGTELESVPLCSSKDPDEVETESRGPPTTSDLLAPD).

The protein belongs to the peptidase S8 family. Ca(2+) is required as a cofactor. Cysteine residues in the cytoplasmic tail are probably palmitoylated. Post-translationally, N-glycosylated. As to expression, expressed in spleen, thymus, prostate, testis, ovary, small intestine, colon and peripheral blood leukocyte.

It is found in the golgi apparatus. Its subcellular location is the trans-Golgi network membrane. With respect to regulation, inhibited by zinc and copper. In terms of biological role, serine endoprotease that processes various proproteins by cleavage at paired basic amino acids, recognizing the RXXX[KR]R consensus motif. Likely functions in the constitutive secretory pathway. The protein is Proprotein convertase subtilisin/kexin type 7 (PCSK7) of Homo sapiens (Human).